The following is a 474-amino-acid chain: Catalase (474 aa).

Active-site residues include His52 and Asn124. Position 334 (Tyr334) interacts with heme.

Belongs to the catalase family. Heme is required as a cofactor.

It carries out the reaction 2 H2O2 = O2 + 2 H2O. Functionally, decomposes hydrogen peroxide into water and oxygen; serves to protect cells from the toxic effects of hydrogen peroxide. The protein is Catalase (katA) of Campylobacter jejuni subsp. jejuni serotype O:2 (strain ATCC 700819 / NCTC 11168).